The primary structure comprises 172 residues: Shikimate kinase (172 aa).

ATP is bound at residue 14–19; that stretch reads GAGKST. Ser-18 is a Mg(2+) binding site. 3 residues coordinate substrate: Asp-36, Arg-60, and Gly-82. An ATP-binding site is contributed by Arg-120. Arg-140 is a substrate binding site.

This sequence belongs to the shikimate kinase family. Monomer. The cofactor is Mg(2+).

It localises to the cytoplasm. It catalyses the reaction shikimate + ATP = 3-phosphoshikimate + ADP + H(+). The protein operates within metabolic intermediate biosynthesis; chorismate biosynthesis; chorismate from D-erythrose 4-phosphate and phosphoenolpyruvate: step 5/7. In terms of biological role, catalyzes the specific phosphorylation of the 3-hydroxyl group of shikimic acid using ATP as a cosubstrate. The sequence is that of Shikimate kinase from Tolumonas auensis (strain DSM 9187 / NBRC 110442 / TA 4).